A 285-amino-acid chain; its full sequence is Polyamine aminopropyltransferase (285 aa).

Residues aspartate 5–lysine 241 enclose the PABS domain. Glutamine 35 contributes to the S-methyl-5'-thioadenosine binding site. 2 residues coordinate spermidine: histidine 66 and aspartate 90. Residues aspartate 110 and aspartate 141 to glycine 142 contribute to the S-methyl-5'-thioadenosine site. Residue aspartate 160 is the Proton acceptor of the active site. Spermidine is bound at residue aspartate 160–aspartate 163. Proline 167 provides a ligand contact to S-methyl-5'-thioadenosine.

Belongs to the spermidine/spermine synthase family. Homodimer or homotetramer.

The protein localises to the cytoplasm. It carries out the reaction S-adenosyl 3-(methylsulfanyl)propylamine + putrescine = S-methyl-5'-thioadenosine + spermidine + H(+). Its pathway is amine and polyamine biosynthesis; spermidine biosynthesis; spermidine from putrescine: step 1/1. Its function is as follows. Catalyzes the irreversible transfer of a propylamine group from the amino donor S-adenosylmethioninamine (decarboxy-AdoMet) to putrescine (1,4-diaminobutane) to yield spermidine. The sequence is that of Polyamine aminopropyltransferase from Xanthomonas euvesicatoria pv. vesicatoria (strain 85-10) (Xanthomonas campestris pv. vesicatoria).